We begin with the raw amino-acid sequence, 223 residues long: Ribose-5-phosphate isomerase A (223 aa).

Residues 28 to 31, 81 to 84, and 94 to 97 contribute to the substrate site; these read TGST, DGAD, and KGGG. Glu103 functions as the Proton acceptor in the catalytic mechanism. Lys121 is a binding site for substrate.

The protein belongs to the ribose 5-phosphate isomerase family. As to quaternary structure, homodimer.

The enzyme catalyses aldehydo-D-ribose 5-phosphate = D-ribulose 5-phosphate. The protein operates within carbohydrate degradation; pentose phosphate pathway; D-ribose 5-phosphate from D-ribulose 5-phosphate (non-oxidative stage): step 1/1. Its function is as follows. Catalyzes the reversible conversion of ribose-5-phosphate to ribulose 5-phosphate. The protein is Ribose-5-phosphate isomerase A of Janthinobacterium sp. (strain Marseille) (Minibacterium massiliensis).